Here is a 538-residue protein sequence, read N- to C-terminus: MTWMRVMPRCQNRTYKRPRGPPLSIHPLEFFQAKKVEKTAKAKMILYYLASIPLAIICYLAWYLHVPWDLPSLPRIPFYVSILGLWSSMGQDEIYERWLRKPLEAHGAVLIWFAGRWSILVTRPDLLTDMFRNEDLYAKAGSQKKIPWSVIATLVGDNIINSHGDTWKLYTGIMKPGLQKKNFDTAPLLLKSRRFVDEILAEQNSAGRGTGILVNTFVQQWAVDVMGMSFLDLDLQSLEKPHGTVRLEAIQSVIKLMLFRPLFFNFPDLDQFAWLIKSRQRAYEIMHEFGDTLMATVLGRIDSDREKGIKPAEEMVVHMLVDAYRDGRLTEKQFKDNLKIVFLTAHENAQQLVNSMFWEIGKNNEVQTRLRAEILSTNTTTPTSEVVNALPYLTAVVYELLRLYPPVSQLINRVTVRPAMLGNEIPIPAGTFVGWNAYGVHVNPAIWGPDANEFKPERWGRTVGEMHARFRRETVRGTYIPFNAHSRKCLGQGFVLLQMKILLFEVLRRIEWTVDPGYRLKMTPVSYFLESGRKSTDA.

The helical transmembrane segment at 44-64 (MILYYLASIPLAIICYLAWYL) threads the bilayer. Asn378 carries an N-linked (GlcNAc...) asparagine glycan. Cys489 is a binding site for heme.

Belongs to the cytochrome P450 family. It depends on heme as a cofactor.

It is found in the membrane. It participates in secondary metabolite biosynthesis. Its function is as follows. Cytochrome P450 monooxygenase; part of the gene cluster that mediates the biosynthesis of the isocyanide xanthocillin and its derivatives. The first step of the pathway consists in the conversion of tyrosine into a vinyl-isonitrile intermediate by the isocyanide synthase xanB. Subsequent oxidative dimerization of this intermediate to form xanthocillin may involve the cytochrome P450 monooxygenase xanG, whose expression is coregulated with that of XanB. Xanthocillin can be further modified by the isonitrile hydratase-like protein xanA which introduces N-formyl groups and the methyltransferase xanE which introduces methyl groups, leading to the production of several derivatives including fumiformamide. Finally, fumiformamide can be subject to both oxidative and reductive cyclization to yield melanocins E and F, respectively. The polypeptide is Cytochrome P450 monooxygenase xanG (Aspergillus fumigatus (strain ATCC MYA-4609 / CBS 101355 / FGSC A1100 / Af293) (Neosartorya fumigata)).